Consider the following 227-residue polypeptide: uncharacterized protein (227 aa).

An N-terminal signal peptide occupies residues 1-23 (MKKRFSLIMMTGLLFGLTSPAFA). The VWFA domain maps to 36-227 (NVAVLLDASG…FTQQSLMLSK (192 aa)).

The protein to B.subtilis YwmD.

This is an uncharacterized protein from Bacillus subtilis (strain 168).